The primary structure comprises 184 residues: Photosystem I assembly protein Ycf4 (184 aa).

2 helical membrane passes run 22–42 (FFWACILFLGSLGFLLVGTSS) and 57–77 (ILFFPQGIVMSFYGIAGLFIS).

This sequence belongs to the Ycf4 family.

Its subcellular location is the plastid. It is found in the chloroplast thylakoid membrane. Seems to be required for the assembly of the photosystem I complex. The sequence is that of Photosystem I assembly protein Ycf4 from Nandina domestica (Heavenly bamboo).